Consider the following 493-residue polypeptide: Glutamate--tRNA ligase (493 aa).

The 'HIGH' region signature appears at 10–20; it reads PSPTGDPHVGT. The short motif at 251–255 is the 'KMSKS' region element; the sequence is KLSKR. Residue Lys-254 coordinates ATP.

It belongs to the class-I aminoacyl-tRNA synthetase family. Glutamate--tRNA ligase type 1 subfamily. As to quaternary structure, monomer.

It is found in the cytoplasm. The enzyme catalyses tRNA(Glu) + L-glutamate + ATP = L-glutamyl-tRNA(Glu) + AMP + diphosphate. Functionally, catalyzes the attachment of glutamate to tRNA(Glu) in a two-step reaction: glutamate is first activated by ATP to form Glu-AMP and then transferred to the acceptor end of tRNA(Glu). The polypeptide is Glutamate--tRNA ligase (Pseudomonas savastanoi pv. phaseolicola (strain 1448A / Race 6) (Pseudomonas syringae pv. phaseolicola (strain 1448A / Race 6))).